A 233-amino-acid chain; its full sequence is Probable chemoreceptor glutamine deamidase CheD (233 aa).

This sequence belongs to the CheD family.

It carries out the reaction L-glutaminyl-[protein] + H2O = L-glutamyl-[protein] + NH4(+). Probably deamidates glutamine residues to glutamate on methyl-accepting chemotaxis receptors (MCPs), playing an important role in chemotaxis. This chain is Probable chemoreceptor glutamine deamidase CheD, found in Vibrio cholerae serotype O1 (strain ATCC 39315 / El Tor Inaba N16961).